A 279-amino-acid chain; its full sequence is Phosphate import ATP-binding protein PstB 2 (279 aa).

The ABC transporter domain occupies 34–274 (FDIENLDLYY…PSDDRTRGYV (241 aa)). Residue 66-73 (GPSGCGKS) coordinates ATP.

Belongs to the ABC transporter superfamily. Phosphate importer (TC 3.A.1.7) family. In terms of assembly, the complex is composed of two ATP-binding proteins (PstB), two transmembrane proteins (PstC and PstA) and a solute-binding protein (PstS).

Its subcellular location is the cell inner membrane. It carries out the reaction phosphate(out) + ATP + H2O = ADP + 2 phosphate(in) + H(+). Its function is as follows. Part of the ABC transporter complex PstSACB involved in phosphate import. Responsible for energy coupling to the transport system. The polypeptide is Phosphate import ATP-binding protein PstB 2 (Vibrio vulnificus (strain YJ016)).